Here is a 278-residue protein sequence, read N- to C-terminus: Large ribosomal subunit protein uL2 (278 aa).

Residues 223–278 (GVAMNPIDHPHGGGEGRTSGGRHPVTPWGFPTKGKKTRSNKRTDTFIVSSRHNRKK) form a disordered region.

The protein belongs to the universal ribosomal protein uL2 family. In terms of assembly, part of the 50S ribosomal subunit. Forms a bridge to the 30S subunit in the 70S ribosome.

In terms of biological role, one of the primary rRNA binding proteins. Required for association of the 30S and 50S subunits to form the 70S ribosome, for tRNA binding and peptide bond formation. It has been suggested to have peptidyltransferase activity; this is somewhat controversial. Makes several contacts with the 16S rRNA in the 70S ribosome. The protein is Large ribosomal subunit protein uL2 of Methylobacterium nodulans (strain LMG 21967 / CNCM I-2342 / ORS 2060).